The following is a 222-amino-acid chain: MNEFKKYATRHIGLNAQALDDYTRIQSSYISPTIIEERQLNVAQMDVFSRLMMDRIIFLGTQIDDYTANVIQAQLLYLDSADPGKDISIYLNSPGGSVYAGYGIYDTMQYIGCDVATICTGMAASMASVLLVAGTKGKRFALPHSRVMIHQPLGGMQGQASDLEIAAREILRVKKELYTIISSHSGKPVEQVEKDSDRDYWMTAPEALEYGMIDKILEKNRK.

S125 acts as the Nucleophile in catalysis. Residue H150 is part of the active site.

It belongs to the peptidase S14 family. In terms of assembly, fourteen ClpP subunits assemble into 2 heptameric rings which stack back to back to give a disk-like structure with a central cavity, resembling the structure of eukaryotic proteasomes.

Its subcellular location is the cytoplasm. It carries out the reaction Hydrolysis of proteins to small peptides in the presence of ATP and magnesium. alpha-casein is the usual test substrate. In the absence of ATP, only oligopeptides shorter than five residues are hydrolyzed (such as succinyl-Leu-Tyr-|-NHMec, and Leu-Tyr-Leu-|-Tyr-Trp, in which cleavage of the -Tyr-|-Leu- and -Tyr-|-Trp bonds also occurs).. Functionally, cleaves peptides in various proteins in a process that requires ATP hydrolysis. Has a chymotrypsin-like activity. Plays a major role in the degradation of misfolded proteins. The polypeptide is ATP-dependent Clp protease proteolytic subunit (Porphyromonas gingivalis (strain ATCC BAA-308 / W83)).